A 275-amino-acid polypeptide reads, in one-letter code: uncharacterized protein (275 aa).

It belongs to the SMP-30/CGR1 family.

This is an uncharacterized protein from Sulfolobus acidocaldarius (strain ATCC 33909 / DSM 639 / JCM 8929 / NBRC 15157 / NCIMB 11770).